Reading from the N-terminus, the 408-residue chain is Tyrosine--tRNA ligase (408 aa).

Positions 46–55 (PTAPDLHVGH) match the 'HIGH' region motif. A 'KMSKS' region motif is present at residues 230–234 (KMSKS). Lys233 serves as a coordination point for ATP. In terms of domain architecture, S4 RNA-binding spans 343-404 (VWICRLLTDA…GKRRFARIKF (62 aa)).

It belongs to the class-I aminoacyl-tRNA synthetase family. TyrS type 2 subfamily. Homodimer.

Its subcellular location is the cytoplasm. The enzyme catalyses tRNA(Tyr) + L-tyrosine + ATP = L-tyrosyl-tRNA(Tyr) + AMP + diphosphate + H(+). Catalyzes the attachment of tyrosine to tRNA(Tyr) in a two-step reaction: tyrosine is first activated by ATP to form Tyr-AMP and then transferred to the acceptor end of tRNA(Tyr). This chain is Tyrosine--tRNA ligase, found in Syntrophotalea carbinolica (strain DSM 2380 / NBRC 103641 / GraBd1) (Pelobacter carbinolicus).